The primary structure comprises 139 residues: Arsenate reductase (139 aa).

Active-site nucleophile residues include Cys-10, Cys-82, and Cys-89. 2 cysteine pairs are disulfide-bonded: Cys-10-Cys-82 and Cys-82-Cys-89.

Belongs to the low molecular weight phosphotyrosine protein phosphatase family. Thioredoxin-coupled ArsC subfamily. Monomer.

Its subcellular location is the cytoplasm. The enzyme catalyses arsenate + [thioredoxin]-dithiol + H(+) = arsenite + [thioredoxin]-disulfide + H2O. With respect to regulation, activity is potassium and sulfate-independent. In terms of biological role, catalyzes the reduction of arsenate [As(V)] to arsenite [As(III)]. In vitro, can dephosphorylate para-nitrophenyl phosphate (pNPP). This Bacillus subtilis (strain 168) protein is Arsenate reductase.